The primary structure comprises 181 residues: Adenine phosphoribosyltransferase (181 aa).

It belongs to the purine/pyrimidine phosphoribosyltransferase family. As to quaternary structure, homodimer.

It localises to the cytoplasm. The catalysed reaction is AMP + diphosphate = 5-phospho-alpha-D-ribose 1-diphosphate + adenine. It functions in the pathway purine metabolism; AMP biosynthesis via salvage pathway; AMP from adenine: step 1/1. Its function is as follows. Catalyzes a salvage reaction resulting in the formation of AMP, that is energically less costly than de novo synthesis. The sequence is that of Adenine phosphoribosyltransferase from Neorhizobium galegae (Rhizobium galegae).